Here is a 136-residue protein sequence, read N- to C-terminus: MLQPKRTKFRKMHKGRNRGLAAGADVSFGSFGLKAVGRGRLTARQIEAARRAMTRAVKRQGKIWIRVFPDKPITEKPLAVRMGKGKGNVEYWVALIQPGKVLYEMDGVPEELAREAFKLAAAKLPIKTTFVTKTVM.

The protein belongs to the universal ribosomal protein uL16 family. As to quaternary structure, part of the 50S ribosomal subunit.

Functionally, binds 23S rRNA and is also seen to make contacts with the A and possibly P site tRNAs. In Salmonella agona (strain SL483), this protein is Large ribosomal subunit protein uL16.